The chain runs to 211 residues: 2,3-bisphosphoglycerate-dependent phosphoglycerate mutase (211 aa).

Substrate is bound by residues 9–16 (RHGQSDWN), 22–23 (TG), arginine 61, 88–91 (ERDY), lysine 99, 115–116 (RR), and 159–160 (GN). Histidine 10 (tele-phosphohistidine intermediate) is an active-site residue. Glutamate 88 (proton donor/acceptor) is an active-site residue.

This sequence belongs to the phosphoglycerate mutase family. BPG-dependent PGAM subfamily. As to quaternary structure, homodimer.

It catalyses the reaction (2R)-2-phosphoglycerate = (2R)-3-phosphoglycerate. It functions in the pathway carbohydrate degradation; glycolysis; pyruvate from D-glyceraldehyde 3-phosphate: step 3/5. Functionally, catalyzes the interconversion of 2-phosphoglycerate and 3-phosphoglycerate. The sequence is that of 2,3-bisphosphoglycerate-dependent phosphoglycerate mutase from Rhizobium rhizogenes (strain K84 / ATCC BAA-868) (Agrobacterium radiobacter).